Here is a 125-residue protein sequence, read N- to C-terminus: Small ribosomal subunit protein uS13 (125 aa).

The disordered stretch occupies residues 92–125; it reads RRSLPVRGQNTQTNARTRKGKRKTVAGKKKAARK. Positions 107-125 are enriched in basic residues; sequence RTRKGKRKTVAGKKKAARK.

It belongs to the universal ribosomal protein uS13 family. Part of the 30S ribosomal subunit. Forms a loose heterodimer with protein S19. Forms two bridges to the 50S subunit in the 70S ribosome.

In terms of biological role, located at the top of the head of the 30S subunit, it contacts several helices of the 16S rRNA. In the 70S ribosome it contacts the 23S rRNA (bridge B1a) and protein L5 of the 50S subunit (bridge B1b), connecting the 2 subunits; these bridges are implicated in subunit movement. Contacts the tRNAs in the A and P-sites. The chain is Small ribosomal subunit protein uS13 from Chlorobium luteolum (strain DSM 273 / BCRC 81028 / 2530) (Pelodictyon luteolum).